Consider the following 163-residue polypeptide: Nucleotide-binding protein YajQ (163 aa).

This sequence belongs to the YajQ family.

Functionally, nucleotide-binding protein. The sequence is that of Nucleotide-binding protein YajQ from Salmonella heidelberg (strain SL476).